The following is a 117-amino-acid chain: Large ribosomal subunit protein eL34 (117 aa).

The residue at position 12 (Ser12) is a Phosphoserine. The span at 16 to 28 (ASNKTRLSRTPGQ) shows a compositional bias: polar residues. A disordered region spans residues 16–35 (ASNKTRLSRTPGQQDRLPLH). Lys108 is covalently cross-linked (Glycyl lysine isopeptide (Lys-Gly) (interchain with G-Cter in SUMO2)).

This sequence belongs to the eukaryotic ribosomal protein eL34 family. As to quaternary structure, component of the large ribosomal subunit.

It is found in the cytoplasm. Its subcellular location is the cytosol. The protein resides in the endoplasmic reticulum. Component of the large ribosomal subunit. The ribosome is a large ribonucleoprotein complex responsible for the synthesis of proteins in the cell. This is Large ribosomal subunit protein eL34 (RPL34) from Vicugna pacos (Alpaca).